The following is a 255-amino-acid chain: tRNA (guanine-N(1)-)-methyltransferase (255 aa).

S-adenosyl-L-methionine contacts are provided by residues glycine 113 and 133–138; that span reads IGDYVL.

It belongs to the RNA methyltransferase TrmD family. In terms of assembly, homodimer.

It localises to the cytoplasm. It carries out the reaction guanosine(37) in tRNA + S-adenosyl-L-methionine = N(1)-methylguanosine(37) in tRNA + S-adenosyl-L-homocysteine + H(+). Its function is as follows. Specifically methylates guanosine-37 in various tRNAs. The protein is tRNA (guanine-N(1)-)-methyltransferase of Mannheimia succiniciproducens (strain KCTC 0769BP / MBEL55E).